The following is a 187-amino-acid chain: Elongation factor P (187 aa).

Belongs to the elongation factor P family.

The protein localises to the cytoplasm. The protein operates within protein biosynthesis; polypeptide chain elongation. Its function is as follows. Involved in peptide bond synthesis. Stimulates efficient translation and peptide-bond synthesis on native or reconstituted 70S ribosomes in vitro. Probably functions indirectly by altering the affinity of the ribosome for aminoacyl-tRNA, thus increasing their reactivity as acceptors for peptidyl transferase. This is Elongation factor P from Clavibacter michiganensis subsp. michiganensis (strain NCPPB 382).